The primary structure comprises 150 residues: Ribosome maturation factor RimP (150 aa).

The protein belongs to the RimP family.

Its subcellular location is the cytoplasm. Functionally, required for maturation of 30S ribosomal subunits. This chain is Ribosome maturation factor RimP, found in Francisella tularensis subsp. mediasiatica (strain FSC147).